A 370-amino-acid polypeptide reads, in one-letter code: Putative L-lysine 2,3-aminomutase aq_454 (370 aa).

The 216-residue stretch at 107–322 folds into the Radical SAM core domain; that stretch reads HRYPDRVLLN…RGRLSGFGIP (216 aa). 3 residues coordinate [4Fe-4S] cluster: C121, C125, and C128. K334 is modified (N6-(pyridoxal phosphate)lysine).

This sequence belongs to the radical SAM superfamily. KamA family. It depends on [4Fe-4S] cluster as a cofactor. Pyridoxal 5'-phosphate serves as cofactor.

The protein is Putative L-lysine 2,3-aminomutase aq_454 of Aquifex aeolicus (strain VF5).